Reading from the N-terminus, the 219-residue chain is Isovaleryl-homoserine lactone synthase (219 aa).

It belongs to the autoinducer synthase family.

The enzyme catalyses 3-methylbutanoyl-CoA + S-adenosyl-L-methionine = N-isovaleryl-L-homoserine lactone + S-methyl-5'-thioadenosine + CoA + H(+). In terms of biological role, catalyzes the synthesis of IV-HSL (isovaleryl-homoserine lactone), a quorum-sensing (QS) autoinducer molecule which binds to BjaR1 transcriptional regulator to activate expression of QS-dependent genes. Is active with isovaleryl-CoA but cannot use isovaleryl-ACP as acyl donor. The chain is Isovaleryl-homoserine lactone synthase (bjaI) from Bradyrhizobium diazoefficiens (strain JCM 10833 / BCRC 13528 / IAM 13628 / NBRC 14792 / USDA 110).